Reading from the N-terminus, the 308-residue chain is Exosporium protein A (308 aa).

The protein resides in the spore wall. This Clostridium sporogenes (strain ATCC 15579) protein is Exosporium protein A.